The sequence spans 353 residues: Polyadenylate-binding protein-interacting protein 10 (353 aa).

A disordered region spans residues 1-61; that stretch reads MAVAENAGVK…IDSTPETDDR (61 aa). The segment covering 20–31 has biased composition (low complexity); that stretch reads NNNTAASATETT. Positions 96–106 match the PAM2-like motif; that stretch reads KLNPMAQEFVP. The disordered stretch occupies residues 128 to 159; the sequence is AAPPKLADGNDHFPRRRRSFGQGKRRMNKRTS. The segment covering 141–156 has biased composition (basic residues); it reads PRRRRSFGQGKRRMNK. Positions 142–153 match the Bipartite nuclear localization signal motif; it reads RRRRSFGQGKRR. 2 RRM domains span residues 169-244 and 266-341; these read RTVY…PSKT.

In terms of tissue distribution, expressed in cauline leaves, stems, rosette leaves, immature siliques and primary inflorescences.

It localises to the nucleus. In Arabidopsis thaliana (Mouse-ear cress), this protein is Polyadenylate-binding protein-interacting protein 10 (CID10).